Here is a 585-residue protein sequence, read N- to C-terminus: ATP-dependent lipid A-core flippase (585 aa).

Transmembrane regions (helical) follow at residues 16 to 36 (LWPY…ALII), 66 to 86 (FLSM…ASGF), 156 to 176 (IIGL…ILLV), 252 to 272 (AIAN…VLVL), and 278 to 298 (LRAE…FGLM). One can recognise an ABC transmembrane type-1 domain in the interval 29–313 (VAVVALIINA…LTNVTSQFQR (285 aa)). Positions 345–581 (IQVKNVTFTY…DGAYAQLHRI (237 aa)) constitute an ABC transporter domain. Residue 379-386 (GRSGSGKS) coordinates ATP.

This sequence belongs to the ABC transporter superfamily. Lipid exporter (TC 3.A.1.106) family. As to quaternary structure, homodimer.

The protein localises to the cell inner membrane. It carries out the reaction ATP + H2O + lipid A-core oligosaccharideSide 1 = ADP + phosphate + lipid A-core oligosaccharideSide 2.. In terms of biological role, involved in lipopolysaccharide (LPS) biosynthesis. Translocates lipid A-core from the inner to the outer leaflet of the inner membrane. Transmembrane domains (TMD) form a pore in the inner membrane and the ATP-binding domain (NBD) is responsible for energy generation. The sequence is that of ATP-dependent lipid A-core flippase from Photobacterium profundum (strain SS9).